A 383-amino-acid polypeptide reads, in one-letter code: S-adenosylmethionine synthase (383 aa).

ATP is bound at residue histidine 15. Aspartate 17 contributes to the Mg(2+) binding site. Glutamate 43 provides a ligand contact to K(+). Positions 56 and 99 each coordinate L-methionine. Residues 99–109 (QSPDINQGVDR) are flexible loop. ATP contacts are provided by residues 164 to 166 (DAK), 230 to 231 (RF), aspartate 239, 245 to 246 (RK), alanine 262, and lysine 266. Residue aspartate 239 coordinates L-methionine. Lysine 270 provides a ligand contact to L-methionine.

It belongs to the AdoMet synthase family. As to quaternary structure, homotetramer; dimer of dimers. Requires Mg(2+) as cofactor. It depends on K(+) as a cofactor.

The protein resides in the cytoplasm. The catalysed reaction is L-methionine + ATP + H2O = S-adenosyl-L-methionine + phosphate + diphosphate. The protein operates within amino-acid biosynthesis; S-adenosyl-L-methionine biosynthesis; S-adenosyl-L-methionine from L-methionine: step 1/1. Its function is as follows. Catalyzes the formation of S-adenosylmethionine (AdoMet) from methionine and ATP. The overall synthetic reaction is composed of two sequential steps, AdoMet formation and the subsequent tripolyphosphate hydrolysis which occurs prior to release of AdoMet from the enzyme. This chain is S-adenosylmethionine synthase, found in Pectobacterium atrosepticum (strain SCRI 1043 / ATCC BAA-672) (Erwinia carotovora subsp. atroseptica).